Consider the following 344-residue polypeptide: MNYSKYETMKQLIADMKLPDYRYEQIIKAIFSQHTSTFEKMSTLPLELKKSLINTFGPSVCCTVPVACQTSGQADKILFSLPDGNRVETVNLHYKKGWESFCISSQCGCGFGCQFCATGTLGHKRNMTADEITDQLLYFHLNGHKLNSISFMGMGEPLANPNLFDALNILNDSSLFGLSQRRITISTIGIIPGIKRLTHEFPQINLAYSLHSPFENQRSELMPVNRSFPLHEVMNALDNHIRHTGRRLFLAYIMLNGVNDSVDHAKALVELLQDRGPWAHLYHVDLIPYNATDKTPRKFASSDKITMKRFRDILHANGISVATRTQFGSDISAACGQLLGEKDV.

Glutamate 88 (proton acceptor) is an active-site residue. The Radical SAM core domain occupies lysine 95–arginine 324. A disulfide bond links cysteine 102 and cysteine 335. Cysteine 109, cysteine 113, and cysteine 116 together coordinate [4Fe-4S] cluster. S-adenosyl-L-methionine contacts are provided by residues glycine 155–glutamate 156, serine 186, serine 209–histidine 211, and asparagine 290. The S-methylcysteine intermediate role is filled by cysteine 335.

Belongs to the radical SAM superfamily. RlmN family. Cfr subfamily. The cofactor is [4Fe-4S] cluster.

It is found in the cytoplasm. It carries out the reaction adenosine(2503) in 23S rRNA + 2 reduced [2Fe-2S]-[ferredoxin] + 2 S-adenosyl-L-methionine = 8-methyladenosine(2503) in 23S rRNA + 5'-deoxyadenosine + L-methionine + 2 oxidized [2Fe-2S]-[ferredoxin] + S-adenosyl-L-homocysteine. Functionally, specifically methylates position 8 of adenine 2503 in 23S rRNA. Confers resistance to some classes of antibiotics. This Lachnoclostridium phytofermentans (strain ATCC 700394 / DSM 18823 / ISDg) (Clostridium phytofermentans) protein is Ribosomal RNA large subunit methyltransferase Cfr.